The following is a 213-amino-acid chain: Motile sperm domain-containing protein 1 (213 aa).

The 128-residue stretch at 16 to 143 folds into the MSP domain; sequence PVFVFPTELI…KEHLTESLFF (128 aa). 2 helical membrane passes run 159–179 and 191–211; these read SLLT…PTLG and LSVN…MAIL. Residues 205–208 carry the Nuclear export signal motif; it reads LITM.

Its subcellular location is the endoplasmic reticulum membrane. The protein localises to the golgi apparatus membrane. Plays a role in differentiation and/or proliferation of mesenchymal stem cells. Proposed to be involved in epithelial-to-mesenchymal transition (EMT). However, another study suggests that it is not required for EMT or stem cell self-renewal and acts during later stages of differentiation. The protein is Motile sperm domain-containing protein 1 (MOSPD1) of Homo sapiens (Human).